The sequence spans 180 residues: dCTP deaminase, dUMP-forming (180 aa).

Residues 96-101 (RSSLGR), aspartate 113, 121-123 (TLE), glutamine 142, tyrosine 156, and glutamine 163 contribute to the dCTP site. The Proton donor/acceptor role is filled by glutamate 123.

The protein belongs to the dCTP deaminase family. In terms of assembly, homotrimer.

It catalyses the reaction dCTP + 2 H2O = dUMP + NH4(+) + diphosphate. The protein operates within pyrimidine metabolism; dUMP biosynthesis; dUMP from dCTP: step 1/1. In terms of biological role, bifunctional enzyme that catalyzes both the deamination of dCTP to dUTP and the hydrolysis of dUTP to dUMP without releasing the toxic dUTP intermediate. This is dCTP deaminase, dUMP-forming from Aquifex aeolicus (strain VF5).